The sequence spans 365 residues: MNTLGRFLRLTTFGESHGDVIGGVLDGMPSGIKIDYALLENEMKRRQGGRNVFITPRKEDDKVEITSGVFEDFSTGTPIGFLIHNQRARSKDYDNIKNLFRPSHADFTYFHKYGIRDFRGGGRSSARESAIRVAAGAFAKMLLREIGIVCESGIIEIGGIKAKNYDFNHALKSEIFALDEEQEEAQKTAIQNAIKNHDSIGGVALIRARSIKTNQKLPIGLGQGLYAKLDAKIAEAMMGLNGVKAVEIGKGVESSLLKGSEYNDLMDQKGFLSNRSGGVLGGMSNGEEIIVRVHFKPTPSIFQPQRTIDINGNECECLLKGRHDPCIAIRGSVVCESLLALVLADMVLLNLTSKIEYLKTIYNEN.

Arginine 46 provides a ligand contact to NADP(+). Residues 123–125 (RSS), 241–242 (NG), glycine 281, 296–300 (KPTPS), and arginine 322 each bind FMN.

Belongs to the chorismate synthase family. Homotetramer. The cofactor is FMNH2.

It carries out the reaction 5-O-(1-carboxyvinyl)-3-phosphoshikimate = chorismate + phosphate. The protein operates within metabolic intermediate biosynthesis; chorismate biosynthesis; chorismate from D-erythrose 4-phosphate and phosphoenolpyruvate: step 7/7. Catalyzes the anti-1,4-elimination of the C-3 phosphate and the C-6 proR hydrogen from 5-enolpyruvylshikimate-3-phosphate (EPSP) to yield chorismate, which is the branch point compound that serves as the starting substrate for the three terminal pathways of aromatic amino acid biosynthesis. This reaction introduces a second double bond into the aromatic ring system. This is Chorismate synthase from Helicobacter pylori (strain ATCC 700392 / 26695) (Campylobacter pylori).